The chain runs to 571 residues: Proline--tRNA ligase (571 aa).

It belongs to the class-II aminoacyl-tRNA synthetase family. ProS type 1 subfamily. As to quaternary structure, homodimer.

It is found in the cytoplasm. It catalyses the reaction tRNA(Pro) + L-proline + ATP = L-prolyl-tRNA(Pro) + AMP + diphosphate. In terms of biological role, catalyzes the attachment of proline to tRNA(Pro) in a two-step reaction: proline is first activated by ATP to form Pro-AMP and then transferred to the acceptor end of tRNA(Pro). As ProRS can inadvertently accommodate and process non-cognate amino acids such as alanine and cysteine, to avoid such errors it has two additional distinct editing activities against alanine. One activity is designated as 'pretransfer' editing and involves the tRNA(Pro)-independent hydrolysis of activated Ala-AMP. The other activity is designated 'posttransfer' editing and involves deacylation of mischarged Ala-tRNA(Pro). The misacylated Cys-tRNA(Pro) is not edited by ProRS. The protein is Proline--tRNA ligase of Pseudomonas putida (strain ATCC 700007 / DSM 6899 / JCM 31910 / BCRC 17059 / LMG 24140 / F1).